The chain runs to 304 residues: Recombination-associated protein RdgC (304 aa).

This sequence belongs to the RdgC family.

The protein resides in the cytoplasm. It localises to the nucleoid. Functionally, may be involved in recombination. The sequence is that of Recombination-associated protein RdgC from Shewanella sp. (strain ANA-3).